A 295-amino-acid polypeptide reads, in one-letter code: N-acetylmuramic acid 6-phosphate etherase (295 aa).

The SIS domain occupies T53 to K216. Catalysis depends on E81, which acts as the Proton donor. Residue E112 is part of the active site.

Belongs to the GCKR-like family. MurNAc-6-P etherase subfamily. In terms of assembly, homodimer.

It catalyses the reaction N-acetyl-D-muramate 6-phosphate + H2O = N-acetyl-D-glucosamine 6-phosphate + (R)-lactate. It participates in amino-sugar metabolism; N-acetylmuramate degradation. In terms of biological role, specifically catalyzes the cleavage of the D-lactyl ether substituent of MurNAc 6-phosphate, producing GlcNAc 6-phosphate and D-lactate. The chain is N-acetylmuramic acid 6-phosphate etherase from Staphylococcus saprophyticus subsp. saprophyticus (strain ATCC 15305 / DSM 20229 / NCIMB 8711 / NCTC 7292 / S-41).